Consider the following 198-residue polypeptide: RNA-free ribonuclease P (198 aa).

It belongs to the HARP family.

It catalyses the reaction Endonucleolytic cleavage of RNA, removing 5'-extranucleotides from tRNA precursor.. RNA-free RNase P that catalyzes the removal of the 5'-leader sequence from pre-tRNA to produce the mature 5'-terminus. The polypeptide is RNA-free ribonuclease P (Thermococcus kodakarensis (strain ATCC BAA-918 / JCM 12380 / KOD1) (Pyrococcus kodakaraensis (strain KOD1))).